A 388-amino-acid polypeptide reads, in one-letter code: Sulfate adenylyltransferase (388 aa).

It belongs to the sulfate adenylyltransferase family.

The enzyme catalyses sulfate + ATP + H(+) = adenosine 5'-phosphosulfate + diphosphate. It functions in the pathway sulfur metabolism; hydrogen sulfide biosynthesis; sulfite from sulfate: step 1/3. This is Sulfate adenylyltransferase from Trichodesmium erythraeum (strain IMS101).